We begin with the raw amino-acid sequence, 303 residues long: Elongation factor Ts (303 aa).

Positions 80–83 (TDFV) are involved in Mg(2+) ion dislocation from EF-Tu.

Belongs to the EF-Ts family.

Its subcellular location is the cytoplasm. In terms of biological role, associates with the EF-Tu.GDP complex and induces the exchange of GDP to GTP. It remains bound to the aminoacyl-tRNA.EF-Tu.GTP complex up to the GTP hydrolysis stage on the ribosome. The polypeptide is Elongation factor Ts (Clostridium perfringens (strain SM101 / Type A)).